Reading from the N-terminus, the 1188-residue chain is DNA-directed RNA polymerase subunit beta (1188 aa).

It belongs to the RNA polymerase beta chain family. As to quaternary structure, the RNAP catalytic core consists of 2 alpha, 1 beta, 1 beta' and 1 omega subunit. When a sigma factor is associated with the core the holoenzyme is formed, which can initiate transcription.

It catalyses the reaction RNA(n) + a ribonucleoside 5'-triphosphate = RNA(n+1) + diphosphate. DNA-dependent RNA polymerase catalyzes the transcription of DNA into RNA using the four ribonucleoside triphosphates as substrates. In Streptococcus pyogenes serotype M3 (strain ATCC BAA-595 / MGAS315), this protein is DNA-directed RNA polymerase subunit beta.